Reading from the N-terminus, the 392-residue chain is Glyceraldehyde-3-phosphate dehydrogenase A, chloroplastic (392 aa).

Residues 1 to 56 (NSSLQVSNKGFSEFSGLRTSSAIPFGRKTNDDLLSVVAFQTSVIGGGNSKRGVVEA) constitute a chloroplast transit peptide. NADP(+) contacts are provided by residues 67–68 (RI), D91, and R136. Residues 208–210 (SCT), T239, R254, 267–268 (TG), and R290 contribute to the D-glyceraldehyde 3-phosphate site. The active-site Nucleophile is the C209. N372 contacts NADP(+).

This sequence belongs to the glyceraldehyde-3-phosphate dehydrogenase family. Tetramer of either four A chains (GAPDH 2) or two A and two B chains (GAPDH 1).

The protein localises to the plastid. It is found in the chloroplast. It catalyses the reaction D-glyceraldehyde 3-phosphate + phosphate + NADP(+) = (2R)-3-phospho-glyceroyl phosphate + NADPH + H(+). Its pathway is carbohydrate biosynthesis; Calvin cycle. This chain is Glyceraldehyde-3-phosphate dehydrogenase A, chloroplastic (GAPA), found in Nicotiana tabacum (Common tobacco).